Here is a 341-residue protein sequence, read N- to C-terminus: Malate dehydrogenase, mitochondrial (341 aa).

Residues 35-41 (GAGGGIG) and Asp-61 contribute to the NAD(+) site. Substrate is bound by residues Arg-109 and Arg-115. An NAD(+)-binding site is contributed by Asn-122. Positions 147 and 181 each coordinate substrate. The active-site Proton acceptor is His-205. Met-254 is a binding site for NAD(+).

The protein belongs to the LDH/MDH superfamily. MDH type 1 family. Homodimer.

It is found in the mitochondrion matrix. The catalysed reaction is (S)-malate + NAD(+) = oxaloacetate + NADH + H(+). The polypeptide is Malate dehydrogenase, mitochondrial (MDH1) (Schizosaccharomyces pombe (strain 972 / ATCC 24843) (Fission yeast)).